The following is a 134-amino-acid chain: MCEFCVRQADDEDDGGAAASGRPNARTARYSRNYAGPFRKTPDRLLGMGLIRLYQLTLSGFVGNSCRHIPTCSEYGYEAIARHGLWAGGWMTLFRVARCGPGGTSGLDPVPEILSDGFRWWTPRRYLSLGRKRG.

Belongs to the UPF0161 family.

It localises to the cell inner membrane. Could be involved in insertion of integral membrane proteins into the membrane. This is Putative membrane protein insertion efficiency factor from Rhizobium etli (strain ATCC 51251 / DSM 11541 / JCM 21823 / NBRC 15573 / CFN 42).